The sequence spans 83 residues: Cytochrome b559 subunit alpha (83 aa).

A helical membrane pass occupies residues 21–35 (VIHSITIPSLFIAGW). Position 23 (His-23) interacts with heme.

The protein belongs to the PsbE/PsbF family. Heterodimer of an alpha subunit and a beta subunit. PSII is composed of 1 copy each of membrane proteins PsbA, PsbB, PsbC, PsbD, PsbE, PsbF, PsbH, PsbI, PsbJ, PsbK, PsbL, PsbM, PsbT, PsbX, PsbY, PsbZ, Psb30/Ycf12, at least 3 peripheral proteins of the oxygen-evolving complex and a large number of cofactors. It forms dimeric complexes. It depends on heme b as a cofactor.

The protein resides in the plastid. It localises to the chloroplast thylakoid membrane. Functionally, this b-type cytochrome is tightly associated with the reaction center of photosystem II (PSII). PSII is a light-driven water:plastoquinone oxidoreductase that uses light energy to abstract electrons from H(2)O, generating O(2) and a proton gradient subsequently used for ATP formation. It consists of a core antenna complex that captures photons, and an electron transfer chain that converts photonic excitation into a charge separation. The protein is Cytochrome b559 subunit alpha of Physcomitrium patens (Spreading-leaved earth moss).